Reading from the N-terminus, the 1359-residue chain is Junctional cadherin 5-associated protein (1359 aa).

Disordered stretches follow at residues 1–147, 249–411, 454–554, 591–813, 840–1076, 1105–1141, 1157–1207, 1225–1260, and 1276–1359; these read MYSV…SLPV, PLNE…PAHP, NSSP…TCET, SHLP…CNSK, KELQ…TIEI, RAGQ…PRVS, PLFV…KDVE, SVAG…DRLM, and FRNA…VERV. Residues 15–28 show a composition bias toward basic and acidic residues; sequence LSRDPPASREDNPK. Polar residues-rich tracts occupy residues 82 to 91 and 98 to 112; these read PQSTSASRTS and QPPS…TGND. The span at 120 to 135 shows a compositional bias: basic and acidic residues; that stretch reads RQEARSQKPREHENLE. The segment covering 302–321 has biased composition (low complexity); that stretch reads QQSRGGADSSDSQDSQQMDA. Residues 335-353 are compositionally biased toward pro residues; the sequence is LEPPVYVPPPSYRSPPQNI. Over residues 539–554 the composition is skewed to polar residues; it reads RQVSSPYSQGESTCET. The span at 591–613 shows a compositional bias: basic and acidic residues; the sequence is SHLPDRDMDNNDLKPSADQKNGS. Polar residues-rich tracts occupy residues 619 to 632, 689 to 704, and 756 to 773; these read LQEQ…STDL, QQTQ…SSQL, and LSPS…SVDQ. Positions 849–859 are enriched in low complexity; it reads SSSSSSSSSSS. A compositionally biased stretch (basic and acidic residues) spans 868–880; it reads QENRAHCRQEDVG. Residues 1003-1013 are compositionally biased toward polar residues; sequence PKITSAFSSVK. A phosphoserine mark is found at Ser-1044 and Ser-1050. A Phosphoserine modification is found at Ser-1194. Ser-1281 carries the phosphoserine modification. Basic and acidic residues predominate over residues 1324-1342; the sequence is SISREEKEHPAAQKEKSMD.

It is found in the cell junction. The protein localises to the adherens junction. The chain is Junctional cadherin 5-associated protein from Homo sapiens (Human).